A 250-amino-acid chain; its full sequence is NAD-dependent protein deacylase (250 aa).

In terms of domain architecture, Deacetylase sirtuin-type spans 1–248 (MLGEVSKILA…PKLVEEIRRI (248 aa)). 20–39 (GAGISAESGIPTFRGKDGLW) is a binding site for NAD(+). Substrate is bound by residues Tyr-64 and Arg-67. 98–101 (QNVD) provides a ligand contact to NAD(+). His-116 acts as the Proton acceptor in catalysis. Zn(2+) is bound by residues Cys-124, Cys-127, Cys-150, and Cys-153. NAD(+) contacts are provided by residues 190-192 (GTS), 216-218 (NIE), and Ala-234.

This sequence belongs to the sirtuin family. Class III subfamily. Zn(2+) serves as cofactor.

It localises to the cytoplasm. The catalysed reaction is N(6)-acetyl-L-lysyl-[protein] + NAD(+) + H2O = 2''-O-acetyl-ADP-D-ribose + nicotinamide + L-lysyl-[protein]. The enzyme catalyses N(6)-succinyl-L-lysyl-[protein] + NAD(+) + H2O = 2''-O-succinyl-ADP-D-ribose + nicotinamide + L-lysyl-[protein]. Functionally, NAD-dependent lysine deacetylase and desuccinylase that specifically removes acetyl and succinyl groups on target proteins. Modulates the activities of several proteins which are inactive in their acylated form. Deacetylates the N-terminal lysine residue of Alba, the major archaeal chromatin protein and that, in turn, increases Alba's DNA binding affinity, thereby repressing transcription. In Pyrococcus furiosus (strain ATCC 43587 / DSM 3638 / JCM 8422 / Vc1), this protein is NAD-dependent protein deacylase.